A 413-amino-acid polypeptide reads, in one-letter code: S-adenosylmethionine synthase (413 aa).

His15 serves as a coordination point for ATP. Asp17 serves as a coordination point for Mg(2+). K(+) is bound at residue Glu43. Glu56 and Gln100 together coordinate L-methionine. A flexible loop region spans residues 100 to 110; that stretch reads QSPDISQGVND. ATP contacts are provided by residues 171-173, 248-249, Asp257, 263-264, Ala280, and Lys284; these read DGK, KF, and RK. Asp257 is an L-methionine binding site. Residue Lys288 coordinates L-methionine.

Belongs to the AdoMet synthase family. Homotetramer; dimer of dimers. Mg(2+) is required as a cofactor. Requires K(+) as cofactor.

The protein resides in the cytoplasm. The catalysed reaction is L-methionine + ATP + H2O = S-adenosyl-L-methionine + phosphate + diphosphate. Its pathway is amino-acid biosynthesis; S-adenosyl-L-methionine biosynthesis; S-adenosyl-L-methionine from L-methionine: step 1/1. Functionally, catalyzes the formation of S-adenosylmethionine (AdoMet) from methionine and ATP. The overall synthetic reaction is composed of two sequential steps, AdoMet formation and the subsequent tripolyphosphate hydrolysis which occurs prior to release of AdoMet from the enzyme. This chain is S-adenosylmethionine synthase, found in Prochlorococcus marinus (strain MIT 9301).